We begin with the raw amino-acid sequence, 494 residues long: tRNA-2-methylthio-N(6)-dimethylallyladenosine synthase (494 aa).

Positions 12–131 (PTYRVVTYGC…LPVLLKRARH (120 aa)) constitute an MTTase N-terminal domain. Residues Cys21, Cys60, Cys94, Cys168, Cys172, and Cys175 each contribute to the [4Fe-4S] cluster site. One can recognise a Radical SAM core domain in the interval 154–385 (RDSAYSAWVS…ELVDDIAWQE (232 aa)). Residues 387-457 (KAQVGRAVEV…PHHLVADGGL (71 aa)) enclose the TRAM domain.

It belongs to the methylthiotransferase family. MiaB subfamily. Monomer. The cofactor is [4Fe-4S] cluster.

It localises to the cytoplasm. The catalysed reaction is N(6)-dimethylallyladenosine(37) in tRNA + (sulfur carrier)-SH + AH2 + 2 S-adenosyl-L-methionine = 2-methylsulfanyl-N(6)-dimethylallyladenosine(37) in tRNA + (sulfur carrier)-H + 5'-deoxyadenosine + L-methionine + A + S-adenosyl-L-homocysteine + 2 H(+). Catalyzes the methylthiolation of N6-(dimethylallyl)adenosine (i(6)A), leading to the formation of 2-methylthio-N6-(dimethylallyl)adenosine (ms(2)i(6)A) at position 37 in tRNAs that read codons beginning with uridine. This chain is tRNA-2-methylthio-N(6)-dimethylallyladenosine synthase, found in Cutibacterium acnes (strain DSM 16379 / KPA171202) (Propionibacterium acnes).